A 209-amino-acid chain; its full sequence is Uracil phosphoribosyltransferase (209 aa).

5-phospho-alpha-D-ribose 1-diphosphate is bound by residues arginine 79, arginine 104, and 131–139 (DPMLATGGS). Uracil is bound by residues isoleucine 194 and 199–201 (GDA). Aspartate 200 provides a ligand contact to 5-phospho-alpha-D-ribose 1-diphosphate.

This sequence belongs to the UPRTase family. Requires Mg(2+) as cofactor.

It carries out the reaction UMP + diphosphate = 5-phospho-alpha-D-ribose 1-diphosphate + uracil. Its pathway is pyrimidine metabolism; UMP biosynthesis via salvage pathway; UMP from uracil: step 1/1. Allosterically activated by GTP. Functionally, catalyzes the conversion of uracil and 5-phospho-alpha-D-ribose 1-diphosphate (PRPP) to UMP and diphosphate. This is Uracil phosphoribosyltransferase from Agathobacter rectalis (strain ATCC 33656 / DSM 3377 / JCM 17463 / KCTC 5835 / VPI 0990) (Eubacterium rectale).